The sequence spans 175 residues: Avenin-like a3 (175 aa).

The signal sequence occupies residues 1–19 (MKTMFLLALLAFTATSAVA).

This sequence belongs to the prolamin family. In terms of processing, contains 7 disulfide bonds.

Seed storage protein. Not integrated in the gluten polymer through disulfide bonds, unless incorporated by reduction and reoxidation during dough making. Increases dough strength and bread volume, but decreases dough stability when added into a base wheat flour. In Triticum aestivum (Wheat), this protein is Avenin-like a3.